A 279-amino-acid chain; its full sequence is Small ribosomal subunit protein uS2 (279 aa).

Composition is skewed to acidic residues over residues 1–18 (MTEN…DEAV), 28–42 (TATE…DESN), and 65–81 (ADAE…FDED). A disordered region spans residues 1–81 (MTENDNEVVE…ELEGPTFDED (81 aa)).

Belongs to the universal ribosomal protein uS2 family.

This is Small ribosomal subunit protein uS2 from Haloquadratum walsbyi (strain DSM 16790 / HBSQ001).